Here is a 312-residue protein sequence, read N- to C-terminus: MERDKPVSVSEFLLLGLSRQPQQQHLLFVFFLSMYLATVLGNLLIILAISIDSRLHTPMYFFLSNMSFVDNCFSTTVPKMLANHILRTQTISFSGCLMQMYFISELADMDNFLLAVMAYDRFVAVCRPLHYTAKMIHQLCALLVTGSWVVANSNALLHTLLMARLSFCADNTIPHIFCDVTPLLKLSCSDTHLSEVMILTEAALVTITPFLCLLASYMHITCVVLRVPSTKGRWKAFSTCGSHLAVVLLFYGTIMSPYFRTSSSHSAQRDIAAAVRFTVVTPVMNPLIYSLRNKDIKGALVKVVAVKFFSVQ.

The Extracellular segment spans residues 1-25 (MERDKPVSVSEFLLLGLSRQPQQQH). Residues 26–49 (LLFVFFLSMYLATVLGNLLIILAI) form a helical membrane-spanning segment. At 50–57 (SIDSRLHT) the chain is on the cytoplasmic side. Residues 58–78 (PMYFFLSNMSFVDNCFSTTVP) traverse the membrane as a helical segment. Residues 79–99 (KMLANHILRTQTISFSGCLMQ) lie on the Extracellular side of the membrane. A disulfide bridge connects residues C96 and C188. Residues 100–119 (MYFISELADMDNFLLAVMAY) traverse the membrane as a helical segment. Residues 120 to 138 (DRFVAVCRPLHYTAKMIHQ) lie on the Cytoplasmic side of the membrane. The helical transmembrane segment at 139-157 (LCALLVTGSWVVANSNALL) threads the bilayer. The Extracellular segment spans residues 158 to 195 (HTLLMARLSFCADNTIPHIFCDVTPLLKLSCSDTHLSE). The chain crosses the membrane as a helical span at residues 196 to 218 (VMILTEAALVTITPFLCLLASYM). Residues 219-235 (HITCVVLRVPSTKGRWK) lie on the Cytoplasmic side of the membrane. The chain crosses the membrane as a helical span at residues 236–258 (AFSTCGSHLAVVLLFYGTIMSPY). At 259–271 (FRTSSSHSAQRDI) the chain is on the extracellular side. A helical membrane pass occupies residues 272–291 (AAAVRFTVVTPVMNPLIYSL). Over 292-312 (RNKDIKGALVKVVAVKFFSVQ) the chain is Cytoplasmic.

This sequence belongs to the G-protein coupled receptor 1 family.

Its subcellular location is the cell membrane. Its function is as follows. Odorant receptor. In Homo sapiens (Human), this protein is Putative olfactory receptor 1F2 (OR1F2P).